The chain runs to 242 residues: Zinc finger protein ZOP1 (242 aa).

The Matrin-type zinc-finger motif lies at 11–42; that stretch reads KWCEFCKIWIQNNPTSIRNHDLGKRHRECVDK. Positions 42-71 form a coiled coil; it reads KKLTDMRERSAAKDKELKKNEKLLQQIEAK. The disordered stretch occupies residues 154-242; sequence VKKPVSSSGA…PLLGLYNRPF (89 aa). A compositionally biased stretch (low complexity) spans 155–172; the sequence is KKPVSSSGAGPSVGKPPG. Over residues 201 to 233 the composition is skewed to basic and acidic residues; sequence RQDEKPKKVSAEEKAALKAREAARKRVEDREKP.

In terms of assembly, component of a pre-mRNA splicing complex. Interacts with STA1. Interacts with PRP31.

It is found in the nucleus. Its subcellular location is the cajal body. In terms of biological role, nucleic acid-binding protein that promotes Pol IV-dependent small interfering RNA (siRNA) accumulation, DNA methylation and transcriptional silencing. May possess both RNA-directed DNA methylation (RdDM)-dependent and -independent roles in transcriptional silencing. Acts as a pre-mRNA splicing factor that associates with several typical components of the splicing machinery as well as with Pol II. The protein is Zinc finger protein ZOP1 of Arabidopsis thaliana (Mouse-ear cress).